We begin with the raw amino-acid sequence, 835 residues long: Protein translocase subunit SecA 1 (835 aa).

ATP contacts are provided by residues Gln85, 103-107 (GEGKT), and Asp492. The segment at 788–807 (VQGEAVHPSSDGEEAKKKPV) is disordered. Zn(2+) is bound by residues Cys819, Cys821, Cys830, and Cys831.

It belongs to the SecA family. In terms of assembly, monomer and homodimer. Part of the essential Sec protein translocation apparatus which comprises SecA, SecYEG and auxiliary proteins SecDF. Other proteins may also be involved. Requires Zn(2+) as cofactor.

It is found in the cell membrane. Its subcellular location is the cytoplasm. It catalyses the reaction ATP + H2O + cellular proteinSide 1 = ADP + phosphate + cellular proteinSide 2.. Its function is as follows. Part of the Sec protein translocase complex. Interacts with the SecYEG preprotein conducting channel. Has a central role in coupling the hydrolysis of ATP to the transfer of proteins into and across the cell membrane, serving as an ATP-driven molecular motor driving the stepwise translocation of polypeptide chains across the membrane. The sequence is that of Protein translocase subunit SecA 1 from Bacillus anthracis.